A 157-amino-acid polypeptide reads, in one-letter code: Isotocin-neurophysin IT 1 (157 aa).

An N-terminal signal peptide occupies residues 1-20; the sequence is MFGTSVSALCLLFLLSVCTA. Cysteine 21 and cysteine 26 are disulfide-bonded. At glycine 29 the chain carries Glycine amide. 7 cysteine pairs are disulfide-bonded: cysteine 42/cysteine 86, cysteine 45/cysteine 59, cysteine 53/cysteine 76, cysteine 60/cysteine 66, cysteine 93/cysteine 106, cysteine 100/cysteine 118, and cysteine 107/cysteine 112.

This sequence belongs to the vasopressin/oxytocin family. Seven disulfide bonds are present in neurophysin.

It is found in the secreted. In terms of biological role, isotocin causes contraction of smooth muscles. The sequence is that of Isotocin-neurophysin IT 1 from Oncorhynchus keta (Chum salmon).